The primary structure comprises 473 residues: Cardiolipin synthase C (473 aa).

PLD phosphodiesterase domains follow at residues L125–Y152 and S364–S391. Catalysis depends on residues H130, K132, D137, H369, K371, and D376.

This sequence belongs to the phospholipase D family. Cardiolipin synthase subfamily. ClsC sub-subfamily.

The enzyme catalyses a 1,2-diacyl-sn-glycero-3-phospho-(1'-sn-glycerol) + a 1,2-diacyl-sn-glycero-3-phosphoethanolamine = a cardiolipin + ethanolamine. With respect to regulation, full activity requires coexpression with the neighboring gene ymdB. In terms of biological role, catalyzes the synthesis of cardiolipin (CL) (diphosphatidylglycerol) from phosphatidylglycerol (PG) and phosphatidylethanolamine (PE). In Escherichia coli (strain K12), this protein is Cardiolipin synthase C.